Here is a 32-residue protein sequence, read N- to C-terminus: Toxic phospholipase A2 (32 aa).

Belongs to the phospholipase A2 family. Group III subfamily. The cofactor is Ca(2+).

The protein localises to the secreted. Its subcellular location is the nematocyst. The catalysed reaction is a 1,2-diacyl-sn-glycero-3-phosphocholine + H2O = a 1-acyl-sn-glycero-3-phosphocholine + a fatty acid + H(+). In terms of biological role, PLA2 catalyzes the calcium-dependent hydrolysis of the 2-acyl groups in 3-sn-phosphoglycerides. This chain is Toxic phospholipase A2, found in Rhopilema nomadica (Mediteranean medusa).